Here is a 474-residue protein sequence, read N- to C-terminus: tRNA-2-methylthio-N(6)-dimethylallyladenosine synthase (474 aa).

Residues 3 to 120 enclose the MTTase N-terminal domain; the sequence is QKLHIKTWGC…LPEMINQIRA (118 aa). 6 residues coordinate [4Fe-4S] cluster: C12, C49, C83, C157, C161, and C164. The Radical SAM core domain maps to 143–375; that stretch reads KAEGPTAFVS…QQRINNQAAQ (233 aa). The TRAM domain maps to 378–441; that stretch reads RAMLGTEQRV…TNSLRGDVVR (64 aa).

It belongs to the methylthiotransferase family. MiaB subfamily. In terms of assembly, monomer. It depends on [4Fe-4S] cluster as a cofactor.

The protein resides in the cytoplasm. The catalysed reaction is N(6)-dimethylallyladenosine(37) in tRNA + (sulfur carrier)-SH + AH2 + 2 S-adenosyl-L-methionine = 2-methylsulfanyl-N(6)-dimethylallyladenosine(37) in tRNA + (sulfur carrier)-H + 5'-deoxyadenosine + L-methionine + A + S-adenosyl-L-homocysteine + 2 H(+). Its function is as follows. Catalyzes the methylthiolation of N6-(dimethylallyl)adenosine (i(6)A), leading to the formation of 2-methylthio-N6-(dimethylallyl)adenosine (ms(2)i(6)A) at position 37 in tRNAs that read codons beginning with uridine. In Mannheimia succiniciproducens (strain KCTC 0769BP / MBEL55E), this protein is tRNA-2-methylthio-N(6)-dimethylallyladenosine synthase.